Consider the following 313-residue polypeptide: Foldase protein PrsA (313 aa).

The signal sequence occupies residues 1–20 (MKKKLLAGAITLLSVATLAA). Residue Cys-21 is the site of N-palmitoyl cysteine attachment. A lipid anchor (S-diacylglycerol cysteine) is attached at Cys-21. The PpiC domain occupies 143–241 (TPDVTAQIIR…SQYYIVKLTK (99 aa)).

The protein belongs to the PrsA family.

It localises to the cell membrane. It carries out the reaction [protein]-peptidylproline (omega=180) = [protein]-peptidylproline (omega=0). Plays a major role in protein secretion by helping the post-translocational extracellular folding of several secreted proteins. The polypeptide is Foldase protein PrsA (Streptococcus pneumoniae (strain P1031)).